Here is a 282-residue protein sequence, read N- to C-terminus: Anamorsin homolog (282 aa).

The N-terminal SAM-like domain stretch occupies residues 5-151; that stretch reads VDTNNFVLLL…EVGAKTALSL (147 aa). Residues 152–196 form a linker region; sequence SFAPKPAQPKAETSAAQIWTLSAQDIDDEDVDLLDSDTLLDEDDL. [2Fe-2S] cluster-binding residues include C208, C218, C221, and C223. The fe-S binding site A stretch occupies residues 208-223; it reads CGPGSGKKKACKNCTC. 4 residues coordinate [4Fe-4S] cluster: C243, C246, C254, and C257. 2 short sequence motifs (cx2C motif) span residues 243-246 and 254-257; these read CGSC and CSTC. Residues 243-257 form a fe-S binding site B region; the sequence is CGSCYLGDAFRCSTC.

It belongs to the anamorsin family. Monomer. [2Fe-2S] cluster serves as cofactor. Requires [4Fe-4S] cluster as cofactor.

The protein localises to the cytoplasm. It is found in the mitochondrion intermembrane space. Component of the cytosolic iron-sulfur (Fe-S) protein assembly (CIA) machinery. Required for the maturation of extramitochondrial Fe-S proteins. Part of an electron transfer chain functioning in an early step of cytosolic Fe-S biogenesis, facilitating the de novo assembly of a [4Fe-4S] cluster on the cytosolic Fe-S scaffold complex. Electrons are transferred from NADPH via a FAD- and FMN-containing diflavin oxidoreductase. Together with the diflavin oxidoreductase, also required for the assembly of the diferric tyrosyl radical cofactor of ribonucleotide reductase (RNR), probably by providing electrons for reduction during radical cofactor maturation in the catalytic small subunit. This chain is Anamorsin homolog, found in Nematostella vectensis (Starlet sea anemone).